Consider the following 297-residue polypeptide: uncharacterized protein (297 aa).

Residues 187-285 (EKLIATLHAS…GYAPSAVLKN (99 aa)) enclose the HTH araC/xylS-type domain. 2 consecutive DNA-binding regions (H-T-H motif) follow at residues 204 to 225 (ADMA…LRYT) and 252 to 275 (VGEV…KHKF).

This is an uncharacterized protein from Escherichia coli (strain K12).